We begin with the raw amino-acid sequence, 491 residues long: UDP-N-acetylmuramate--L-alanine ligase (491 aa).

Residue 126-132 (GTHGKTT) participates in ATP binding.

The protein belongs to the MurCDEF family.

The protein resides in the cytoplasm. The catalysed reaction is UDP-N-acetyl-alpha-D-muramate + L-alanine + ATP = UDP-N-acetyl-alpha-D-muramoyl-L-alanine + ADP + phosphate + H(+). It participates in cell wall biogenesis; peptidoglycan biosynthesis. Cell wall formation. In Salmonella choleraesuis (strain SC-B67), this protein is UDP-N-acetylmuramate--L-alanine ligase.